Reading from the N-terminus, the 559-residue chain is Poly(U)-binding-splicing factor PUF60 (559 aa).

Residues 1-516 are inhibits homodimerization; sequence MATATIALQV…EDAEIIVKIF (516 aa). Glycyl lysine isopeptide (Lys-Gly) (interchain with G-Cter in SUMO2) cross-links involve residues Gln-14 and Lys-43. Thr-60 carries the phosphothreonine modification. The tract at residues 77-559 is inhibits transcriptional repression, interaction with ERCC3 and apoptosis induction; that stretch reads QSIKSVLVKQ…ERFDNSDLSA (483 aa). Lys-80 participates in a covalent cross-link: Glycyl lysine isopeptide (Lys-Gly) (interchain with G-Cter in SUMO2). Ser-112 carries the post-translational modification Phosphoserine. 2 RRM domains span residues 129–207 and 226–304; these read CRVY…RPSN and NRIY…KAVT. Residue Ser-244 is modified to Phosphoserine. An N6-acetyllysine modification is found at Lys-251. Thr-314 carries the post-translational modification Phosphothreonine. The segment at 416–437 is disordered; sequence KKEKEEEELFPESERPEMLSEQ. Lys-419 participates in a covalent cross-link: Glycyl lysine isopeptide (Lys-Gly) (interchain with G-Cter in SUMO2). Residues 427–437 are compositionally biased toward basic and acidic residues; sequence ESERPEMLSEQ. Residue Lys-454 is modified to N6-acetyllysine. Residue Lys-458 forms a Glycyl lysine isopeptide (Lys-Gly) (interchain with G-Cter in SUMO2) linkage. The RRM 3; atypical domain occupies 462 to 549; that stretch reads TVMVLRNMVD…RKVVAEVYDQ (88 aa).

Belongs to the RRM half pint family. In terms of assembly, homodimer. Associates with the spliceosome. Found in a complex with RO60 and Y5 RNA. Found in a complex with FUBP1 and far upstream element (FUSE) DNA segment. Interacts directly with ERCC3. Interacts with CDK7 and GTF2H1. Interacts with SRSF11/P54. Does not interact with ERCC3 in xeroderma pigmentosum complementation group B (XPB) cells. Interacts with ARGLU1; interaction may be involved in ARGLU1-mediated modulation of alternative splicing. In terms of tissue distribution, isoform 2 is expressed in colonic epithelium and colorectal epithelium cancer (at protein level). Isoform 6 is expressed in colorectal epithelial cancer but below detection level in colonic epithelium. Expressed in heart, brain, placenta, lung, liver, skeletal muscle, kidney, pancreas, spleen, thymus, prostate, testis, ovary, small intestine, colon and peripheral blood leukocytes.

It localises to the nucleus. Functionally, DNA- and RNA-binding protein, involved in several nuclear processes such as pre-mRNA splicing, apoptosis and transcription regulation. In association with FUBP1 regulates MYC transcription at the P2 promoter through the core-TFIIH basal transcription factor. Acts as a transcriptional repressor through the core-TFIIH basal transcription factor. Represses FUBP1-induced transcriptional activation but not basal transcription. Decreases ERCC3 helicase activity. Does not repress TFIIH-mediated transcription in xeroderma pigmentosum complementation group B (XPB) cells. Is also involved in pre-mRNA splicing. Promotes splicing of an intron with weak 3'-splice site and pyrimidine tract in a cooperative manner with U2AF2. Involved in apoptosis induction when overexpressed in HeLa cells. Isoform 6 failed to repress MYC transcription and inhibited FIR-induced apoptosis in colorectal cancer. Isoform 6 may contribute to tumor progression by enabling increased MYC expression and greater resistance to apoptosis in tumors than in normal cells. Modulates alternative splicing of several mRNAs. Binds to relaxed DNA of active promoter regions. Binds to the pyrimidine tract and 3'-splice site regions of pre-mRNA; binding is enhanced in presence of U2AF2. Binds to Y5 RNA in association with RO60. Binds to poly(U) RNA. This Homo sapiens (Human) protein is Poly(U)-binding-splicing factor PUF60.